We begin with the raw amino-acid sequence, 75 residues long: Serine rich endogenous peptide 4 (75 aa).

A signal peptide spans 1–31 (MATKTSNLGHLLLSLFILLLFILSQVGVAQA). Positions 51-75 (PPPLRGIVKPPIASFHSASPKDKGP) are disordered. Residues 61-75 (PIASFHSASPKDKGP) carry the SCOOP motif motif. Residues 67-69 (SAS) carry the SxS motif essential for MIK2 binding motif.

Belongs to the serine rich endogenous peptide (SCOOP) phytocytokine family. In terms of assembly, interacts with MIK2 (via extracellular leucine-rich repeat domain); this interaction triggers the formation of complex between MIK2 and the BAK1/SERK3 and SERK4 coreceptors, and subsequent BAK1 activation by phosphorylation. As to expression, mostly expressed in leaves and seedlings shoots, and, to a lower extent, in roots, stems, siliques, seeds and flowers.

Its subcellular location is the cell membrane. The protein resides in the secreted. It is found in the extracellular space. The protein localises to the apoplast. Its function is as follows. Brassicaceae-specific phytocytokine (plant endogenous peptide released into the apoplast) perceived by MIK2 in a BAK1/SERK3 and SERK4 coreceptors-dependent manner, that modulates various physiological and antimicrobial processes including growth prevention and reactive oxygen species (ROS) response regulation. Inhibits root growth. Prevents general growth and development. Exhibits antibacterial effects against Pseudomonas syringae pv. tomato DC3000, Ralstonia solanacearum, Bacillus subtilis and Agrobacterium tumefaciens, thus being an antimicrobial peptide (AMP). The protein is Serine rich endogenous peptide 4 of Arabidopsis thaliana (Mouse-ear cress).